The chain runs to 179 residues: ATP synthase subunit delta (179 aa).

Belongs to the ATPase delta chain family. F-type ATPases have 2 components, F(1) - the catalytic core - and F(0) - the membrane proton channel. F(1) has five subunits: alpha(3), beta(3), gamma(1), delta(1), epsilon(1). F(0) has three main subunits: a(1), b(2) and c(10-14). The alpha and beta chains form an alternating ring which encloses part of the gamma chain. F(1) is attached to F(0) by a central stalk formed by the gamma and epsilon chains, while a peripheral stalk is formed by the delta and b chains.

Its subcellular location is the cell inner membrane. In terms of biological role, f(1)F(0) ATP synthase produces ATP from ADP in the presence of a proton or sodium gradient. F-type ATPases consist of two structural domains, F(1) containing the extramembraneous catalytic core and F(0) containing the membrane proton channel, linked together by a central stalk and a peripheral stalk. During catalysis, ATP synthesis in the catalytic domain of F(1) is coupled via a rotary mechanism of the central stalk subunits to proton translocation. Functionally, this protein is part of the stalk that links CF(0) to CF(1). It either transmits conformational changes from CF(0) to CF(1) or is implicated in proton conduction. The polypeptide is ATP synthase subunit delta (Burkholderia multivorans (strain ATCC 17616 / 249)).